Reading from the N-terminus, the 160-residue chain is Eukaryotic translation initiation factor 5A (160 aa).

Residues 1-13 (MSDSEEHHFESKA) show a composition bias toward basic and acidic residues. Residues 1–22 (MSDSEEHHFESKADAGASKTYP) form a disordered region. The residue at position 53 (Lys-53) is a Hypusine.

The protein belongs to the eIF-5A family. Post-translationally, lys-53 undergoes hypusination, a unique post-translational modification that consists in the addition of a butylamino group from spermidine to lysine side chain, leading to the formation of the unusual amino acid hypusine. eIF-5As are the only known proteins to undergo this modification, which is essential for their function.

Functionally, translation factor that promotes translation elongation and termination, particularly upon ribosome stalling at specific amino acid sequence contexts. Binds between the exit (E) and peptidyl (P) site of the ribosome and promotes rescue of stalled ribosome: specifically required for efficient translation of polyproline-containing peptides as well as other motifs that stall the ribosome. Acts as a ribosome quality control (RQC) cofactor by joining the RQC complex to facilitate peptidyl transfer during CAT tailing step. The chain is Eukaryotic translation initiation factor 5A (TIF5A) from Zea mays (Maize).